We begin with the raw amino-acid sequence, 279 residues long: Tryptophan 2,3-dioxygenase (279 aa).

Substrate is bound by residues 48-52 (FIVIH), Y110, and R114. H237 contacts heme. Residue T251 coordinates substrate.

This sequence belongs to the tryptophan 2,3-dioxygenase family. As to quaternary structure, homotetramer. Requires heme as cofactor.

The catalysed reaction is L-tryptophan + O2 = N-formyl-L-kynurenine. It participates in amino-acid degradation; L-tryptophan degradation via kynurenine pathway; L-kynurenine from L-tryptophan: step 1/2. Heme-dependent dioxygenase that catalyzes the oxidative cleavage of the L-tryptophan (L-Trp) pyrrole ring and converts L-tryptophan to N-formyl-L-kynurenine. Catalyzes the oxidative cleavage of the indole moiety. This is Tryptophan 2,3-dioxygenase from Bacillus thuringiensis subsp. konkukian (strain 97-27).